A 665-amino-acid chain; its full sequence is Lamin-A (665 aa).

Met-1 is subject to N-acetylmethionine. The segment at 1–29 (METPGQKRATRSTHTPLSPTRITRLQEKE) is head. Position 18 is a phosphoserine (Ser-18). The 357-residue stretch at 27-383 (EKEDLQGLND…KLLEGEEERL (357 aa)) folds into the IF rod domain. The coil 1A stretch occupies residues 30 to 66 (DLQGLNDRLAVYIDKVRSLELENARLRLRITESEDVI). The linker 1 stretch occupies residues 67-76 (SREVTGIKSA). The interval 77-214 (YETELADARK…SIYNEEMRET (138 aa)) is coil 1B. The interval 215 to 238 (KRRHETRLVEVDNGRQREFESKLA) is linker 2. Residues 239–383 (DALHELRAQH…KLLEGEEERL (145 aa)) are coil 2. Disordered stretches follow at residues 381–441 (ERLR…SVEE), 550–581 (DDED…GEYN), and 602–641 (ASQG…LGES). Residues 384–664 (RLSPSPNTQK…AQVAPQNCSI (281 aa)) are tail. Phosphoserine is present on Ser-388. Positions 399-411 (IASHSGAHISSSA) are enriched in low complexity. Residues 413-418 (KRRRLE) carry the Nuclear localization signal motif. Positions 425 to 542 (SSFTQHARTT…EEVAMRKLVR (118 aa)) constitute an LTD domain. A compositionally biased stretch (polar residues) spans 427–436 (FTQHARTTGK). A compositionally biased stretch (low complexity) spans 605–630 (GSGLVTGSSGSSSSSVTLTRTYRSTG). Position 662 is a cysteine methyl ester (Cys-662). Residue Cys-662 is the site of S-farnesyl cysteine attachment. Positions 663–665 (SIM) are cleaved as a propeptide — removed in mature form.

It belongs to the intermediate filament family. As to quaternary structure, homodimer. Lamin dimers then assemble into dimeric head-to-tail polymers. Ultimately, two head-to-tail polymers assemble laterally into a protofilament with a uniformly shaped rod of 3.5 nm in diameter. In terms of processing, phosphorylation plays a key role in lamin organization, subcellular localization and nuclear envelope disintegration. Phosphorylation by CDK1 at Ser-18 at the onset of mitosis drives lamin disassembly and nuclear envelope breakdown.

The protein localises to the nucleus lamina. The protein resides in the nucleus envelope. It is found in the nucleus. It localises to the nucleoplasm. Its subcellular location is the nucleus matrix. In terms of biological role, lamins are intermediate filament proteins that assemble into a filamentous meshwork, and which constitute the major components of the nuclear lamina, a fibrous layer on the nucleoplasmic side of the inner nuclear membrane. Lamins provide a framework for the nuclear envelope, bridging the nuclear envelope and chromatin, thereby playing an important role in nuclear assembly, chromatin organization, nuclear membrane and telomere dynamics. The structural integrity of the lamina is strictly controlled by the cell cycle, as seen by the disintegration and formation of the nuclear envelope in prophase and telophase, respectively. The protein is Lamin-A (lmna) of Xenopus laevis (African clawed frog).